Reading from the N-terminus, the 170-residue chain is Peptide deformylase (170 aa).

Positions 94 and 136 each coordinate Fe cation. Residue glutamate 137 is part of the active site. Histidine 140 contacts Fe cation.

The protein belongs to the polypeptide deformylase family. Requires Fe(2+) as cofactor.

The enzyme catalyses N-terminal N-formyl-L-methionyl-[peptide] + H2O = N-terminal L-methionyl-[peptide] + formate. Its function is as follows. Removes the formyl group from the N-terminal Met of newly synthesized proteins. Requires at least a dipeptide for an efficient rate of reaction. N-terminal L-methionine is a prerequisite for activity but the enzyme has broad specificity at other positions. This is Peptide deformylase from Xylella fastidiosa (strain M12).